The primary structure comprises 2161 residues: SH3 and multiple ankyrin repeat domains protein 1 (2161 aa).

Positions 1–53 (MTHSPATSEDEERHSASECPEGGSESDSSPDGPGRGPRGTRGQGSGAPGSLAS) are disordered. Low complexity predominate over residues 17 to 32 (SECPEGGSESDSSPDG). Gly residues predominate over residues 33 to 47 (PGRGPRGTRGQGSGA). Tyrosine 186 bears the Phosphotyrosine mark. ANK repeat units lie at residues 212-245 (SGETPLTLAAQTEGSVEVIRTLCLGGAHIDFRAR), 246-278 (DGMTALHKAACARHCLALTALLDLGGSPNYKDR), 279-312 (RGLTPLFHTAMVGGDPRCCELLLFNRAQLGIADE), 313-345 (NGWQEIHQACQRGHSQHLEHLLFYGAEPGAQNA), 346-378 (SGNTALHICALYNKETCARILLYRGADKDVKNN), and 379-395 (NGQTPFQVAVIAGNFEL). Disordered regions lie at residues 412–433 (ESPKYAARRRGPPGTGLTVPPA) and 455–546 (GAAS…SRGR). The segment covering 455–479 (GAASSGAPGPTSGSQGQSQPSAPTT) has biased composition (low complexity). Gly residues predominate over residues 527 to 542 (PAGGTGGSGGPGGSLG). Serine 540 carries the phosphoserine modification. Arginine 544 carries the post-translational modification Omega-N-methylarginine. Residues 554–613 (VPGRSFMAVKSYQAQAEGEISLSKGEKIKVLSIGEGGFWEGQVKGRVGWFPSDCLEEVAN) enclose the SH3 domain. Residues 663–757 (TVLLQKKDSE…TLMVKVVMVT (95 aa)) enclose the PDZ domain. Residues serine 671 and serine 791 each carry the phosphoserine modification. Positions 832–886 (TISASESPGPGGLASLGKHRPKGFFATESSFDPHHRAQPSYERPSFLPPGPGLML) are disordered. A Phosphoserine modification is found at serine 890. Disordered regions lie at residues 909-1229 (SRSL…LDFT), 1241-1289 (RREG…KSID), 1353-1720 (LGLA…GVAS), 1734-1785 (GQAF…PTSP), 1827-1860 (LPTASSLPRKLLPWEEGPGPPPPPLPGPLAQPQA), 1892-1983 (PWAR…TRHL), and 1996-2023 (RRAPSPSLLPASEHKVSPAPRPSSLPIL). A compositionally biased stretch (pro residues) spans 920–939 (IPPPPTTSPPEPPYSTPPVP). Position 950 is an omega-N-methylarginine (arginine 950). Residues 996–1020 (AHHHPPHHHHHHAPPPQPHHHHAHP) are compositionally biased toward basic residues. Omega-N-methylarginine is present on residues arginine 1051, arginine 1090, and arginine 1101. Residues 1127–1144 (PPAPSPTSPASPQPPPAV) show a composition bias toward pro residues. The span at 1164-1181 (STSSSGRSSQGSSTEAEP) shows a compositional bias: low complexity. The span at 1199–1220 (SPAPAMSPVPPSPSPVPTPASP) shows a compositional bias: pro residues. The segment covering 1241 to 1252 (RREGGWQNEARR) has biased composition (basic and acidic residues). Arginine 1253 bears the Asymmetric dimethylarginine mark. Serine 1287 is modified (phosphoserine). Residues 1359-1368 (ARERALKESS) are compositionally biased toward basic and acidic residues. Residues 1374 to 1391 (PQPPPRPPSPRYEAPPPT) show a composition bias toward pro residues. Arginine 1423 carries the omega-N-methylarginine modification. Serine 1436 is modified (phosphoserine). Pro residues-rich tracts occupy residues 1517–1532 (GVPPPSPRRSVPPSPT) and 1583–1609 (PLTPGPPHPLPDTPAPATPLPPVPPPA). Residues 1618 to 1636 (DSTASSLTSYDSEVATLTQ) show a composition bias toward polar residues. Pro residues predominate over residues 1644 to 1670 (DPHPPGPPAPAAPAPAAPQPGPDPPPG). The span at 1678–1688 (VDSRSSSDHPL) shows a compositional bias: basic and acidic residues. The segment covering 1692–1702 (SSASTLSSLSA) has biased composition (low complexity). 2 stretches are compositionally biased toward gly residues: residues 1703 to 1718 (EGGGSAGGGGGAGAGV) and 1764 to 1774 (ASGGLRPGPSG). A compositionally biased stretch (low complexity) spans 1775 to 1785 (GLRDPVTPTSP). The segment covering 1844 to 1855 (PGPPPPPLPGPL) has biased composition (pro residues). Position 1895 is an omega-N-methylarginine (arginine 1895). Composition is skewed to low complexity over residues 1917–1940 (SSLQRQRLSDDSQSSLLSKPVSSL), 1954–1980 (TGTGVSPTAAAAPGATSPSASSSSTST), and 1996–2006 (RRAPSPSLLPA). Omega-N-methylarginine occurs at positions 2016, 2036, and 2074. An SAM domain is found at 2098 to 2161 (WTKFDVADWL…DRALKFFLER (64 aa)).

This sequence belongs to the SHANK family. In terms of assembly, may homomultimerize via its SAM domain. Interacts with the C-terminus of SSTR2 via the PDZ domain. Interacts with IGSF9, SHARPIN, SPTAN1, HOMER1 and DLGAP1/GKAP isoforms 1 and 2. Part of a complex with DLG4/PSD-95 and DLGAP1/GKAP. Interacts with BAIAP2. Interacts with HOMER1 and HOMER3. In terms of tissue distribution, expressed in brain particularly in the amygdala, hippocampus, substantia nigra and thalamus. Isoform 2 seems to be expressed ubiquitously.

It is found in the cytoplasm. The protein localises to the postsynaptic density. It localises to the synapse. Seems to be an adapter protein in the postsynaptic density (PSD) of excitatory synapses that interconnects receptors of the postsynaptic membrane including NMDA-type and metabotropic glutamate receptors via complexes with GKAP/PSD-95 and Homer, respectively, and the actin-based cytoskeleton. Plays a role in the structural and functional organization of the dendritic spine and synaptic junction. In Homo sapiens (Human), this protein is SH3 and multiple ankyrin repeat domains protein 1 (SHANK1).